A 540-amino-acid chain; its full sequence is Chaperonin GroEL 1 (540 aa).

Residues 29–32 (TLGP), 86–90 (DGTTT), G413, 478–480 (NAA), and D494 contribute to the ATP site.

It belongs to the chaperonin (HSP60) family. Forms a cylinder of 14 subunits composed of two heptameric rings stacked back-to-back. Interacts with the co-chaperonin GroES.

The protein localises to the cytoplasm. The enzyme catalyses ATP + H2O + a folded polypeptide = ADP + phosphate + an unfolded polypeptide.. Its function is as follows. Together with its co-chaperonin GroES, plays an essential role in assisting protein folding. The GroEL-GroES system forms a nano-cage that allows encapsulation of the non-native substrate proteins and provides a physical environment optimized to promote and accelerate protein folding. The protein is Chaperonin GroEL 1 of Mycobacterium sp. (strain JLS).